Here is a 43-residue protein sequence, read N- to C-terminus: Protein PsbN (43 aa).

The chain crosses the membrane as a helical span at residues 7 to 27 (LSISIGVMVVAITGFSIYTAF).

It belongs to the PsbN family.

Its subcellular location is the cellular thylakoid membrane. May play a role in photosystem I and II biogenesis. The sequence is that of Protein PsbN from Trichodesmium erythraeum (strain IMS101).